Reading from the N-terminus, the 119-residue chain is Putative membrane protein insertion efficiency factor (119 aa).

The protein belongs to the UPF0161 family.

The protein resides in the cell inner membrane. Functionally, could be involved in insertion of integral membrane proteins into the membrane. The protein is Putative membrane protein insertion efficiency factor of Agrobacterium fabrum (strain C58 / ATCC 33970) (Agrobacterium tumefaciens (strain C58)).